The chain runs to 229 residues: ATP synthase subunit a (229 aa).

6 helical membrane-spanning segments follow: residues 25-45, 86-106, 111-131, 142-162, 181-201, and 202-222; these read ADAI…SLIA, IATL…PGFF, NLNT…IVGI, FMGP…IGHL, LVLM…MMLM, and GVLV…IYIQ.

It belongs to the ATPase A chain family. In terms of assembly, F-type ATPases have 2 components, CF(1) - the catalytic core - and CF(0) - the membrane proton channel. CF(1) has five subunits: alpha(3), beta(3), gamma(1), delta(1), epsilon(1). CF(0) has three main subunits: a(1), b(2) and c(9-12). The alpha and beta chains form an alternating ring which encloses part of the gamma chain. CF(1) is attached to CF(0) by a central stalk formed by the gamma and epsilon chains, while a peripheral stalk is formed by the delta and b chains.

Its subcellular location is the cell inner membrane. Key component of the proton channel; it plays a direct role in the translocation of protons across the membrane. In Geobacter sulfurreducens (strain ATCC 51573 / DSM 12127 / PCA), this protein is ATP synthase subunit a.